Reading from the N-terminus, the 3001-residue chain is BEACH domain-containing protein C2 (3001 aa).

Disordered regions lie at residues 43–80 (DFEQVSLGDQEKAANESQGDLQEPGSFSNSDHGRSSFG), 103–156 (DVQS…KATV), 1018–1076 (NVLA…NVGS), 1846–1868 (TFSSFQKPLEPPNNNAPPRPRDK), 2039–2071 (YSGTDHHGAAADYDDQTETKSDNGSKGSQSNPP), 2101–2132 (AEEHKRDEGRISGSHEHASRTSAGNSDPRTSN), and 2193–2212 (NLADHSDESQSGDQEKDRSW). Phosphoserine is present on serine 48. 3 stretches are compositionally biased toward polar residues: residues 57–72 (NESQGDLQEPGSFSNS), 121–132 (SMQQSLSETSLD), and 1037–1050 (SPYNESGSVKQLDS). The segment covering 1854–1863 (LEPPNNNAPP) has biased composition (pro residues). Residues 2101 to 2119 (AEEHKRDEGRISGSHEHAS) are compositionally biased toward basic and acidic residues. Residues 2120 to 2129 (RTSAGNSDPR) are compositionally biased toward polar residues. Residues 2151 to 2260 (ELDERILLEL…GRRNAYRAIV (110 aa)) form the BEACH-type PH domain. Over residues 2196 to 2211 (DHSDESQSGDQEKDRS) the composition is skewed to basic and acidic residues. A BEACH domain is found at 2275 to 2564 (QRPEQLLRRT…QLLTVPHMKR (290 aa)). WD repeat units follow at residues 2679 to 2718 (SGIRSSSVIAITSDGEIITGGHADNSIKLVSSDGAKTLET), 2721 to 2760 (GHCAPVTCLALSPDNNFLVTGSRDSTVLLWRIHKAFTSRT), 2802 to 2841 (GHRRELVCCCVSSDQGVVVSSSESSDVLLHSIRKGRLIRR), 2842 to 2881 (LVGVKADSLCISSDGVIMAWSSSEGSISVFTINGVLIAKA), and 2953 to 2992 (GQGQDITALALNVDNTNLLVSTEDKQLIIFTDPALSLKVV).

This chain is BEACH domain-containing protein C2, found in Arabidopsis thaliana (Mouse-ear cress).